Reading from the N-terminus, the 186-residue chain is Ribosome-recycling factor (186 aa).

It belongs to the RRF family.

Its subcellular location is the cytoplasm. Responsible for the release of ribosomes from messenger RNA at the termination of protein biosynthesis. May increase the efficiency of translation by recycling ribosomes from one round of translation to another. The protein is Ribosome-recycling factor of Methylibium petroleiphilum (strain ATCC BAA-1232 / LMG 22953 / PM1).